The following is a 312-amino-acid chain: tRNA uridine(34) hydroxylase (312 aa).

The Rhodanese domain maps to 130-225; the sequence is RGDEVVFFDG…YGEQFGNKGL (96 aa). Cys185 serves as the catalytic Cysteine persulfide intermediate.

It belongs to the TrhO family.

It carries out the reaction uridine(34) in tRNA + AH2 + O2 = 5-hydroxyuridine(34) in tRNA + A + H2O. Functionally, catalyzes oxygen-dependent 5-hydroxyuridine (ho5U) modification at position 34 in tRNAs. This is tRNA uridine(34) hydroxylase from Corynebacterium glutamicum (strain R).